A 364-amino-acid chain; its full sequence is Aminomethyltransferase (364 aa).

This sequence belongs to the GcvT family. As to quaternary structure, the glycine cleavage system is composed of four proteins: P, T, L and H.

The catalysed reaction is N(6)-[(R)-S(8)-aminomethyldihydrolipoyl]-L-lysyl-[protein] + (6S)-5,6,7,8-tetrahydrofolate = N(6)-[(R)-dihydrolipoyl]-L-lysyl-[protein] + (6R)-5,10-methylene-5,6,7,8-tetrahydrofolate + NH4(+). Its function is as follows. The glycine cleavage system catalyzes the degradation of glycine. The sequence is that of Aminomethyltransferase from Klebsiella pneumoniae subsp. pneumoniae (strain ATCC 700721 / MGH 78578).